Here is a 343-residue protein sequence, read N- to C-terminus: Replication initiation protein (343 aa).

A disordered region spans residues Glu-42–Asn-61.

Functionally, probably functions as an initiator for the IncI1 ColIb-P9 replicon. This Escherichia coli protein is Replication initiation protein (repZ).